A 254-amino-acid polypeptide reads, in one-letter code: Large ribosomal subunit protein uL4 (254 aa).

Positions 45–70 (PWGNDPEAGKRTSAKGWGSGRGTARV) are disordered.

It belongs to the universal ribosomal protein uL4 family. In terms of assembly, part of the 50S ribosomal subunit.

Functionally, one of the primary rRNA binding proteins, this protein initially binds near the 5'-end of the 23S rRNA. It is important during the early stages of 50S assembly. It makes multiple contacts with different domains of the 23S rRNA in the assembled 50S subunit and ribosome. Forms part of the polypeptide exit tunnel. In Methanobrevibacter smithii (strain ATCC 35061 / DSM 861 / OCM 144 / PS), this protein is Large ribosomal subunit protein uL4.